The sequence spans 501 residues: MPSLLLSLLLLQVPIICAWLLVRFIIDLTGKNGTIPTIRRWPALFPEFLDRLSYNDNAAQLVEEGYRKYKDRPFRLLKMDMDLVVIPLKYATELRAITSDKLDPLTASFDDNAGELTGILLGSELHSDAIHRRLTPGLRIPSTKYCRILTVCAFPERVGYLTDVIGNWTPVIPYELVLRLSTRAAARVFVGETICRDEVFLETCSSFSRNTFDTIATFRNLGKTIGFMLGILTPSVRKAREQGAYVQKLLGSEVERRRACPDEKHDDFLQWCIDLARTEQEAKPEALATRTIGILSMAVVHTTAMATTHMLFDLLADSKLRETLKKEQEDVLPSGWDGIDQNSMLKMRLLDSLMRESQRINPVGEFTFRRVVRKPITLSDGYQLRRGQQIAISARRINMDGATLEDAQTFCPSRWAQETQGASFSHSSSSNLHFGLGRYACPGRFFASYMIKAITSRILLEYDFKLESGREGYRPPNSIQGDKILPNRDAVVLFRRREVSI.

The helical transmembrane segment at 2–22 (PSLLLSLLLLQVPIICAWLLV) threads the bilayer. Residue Cys441 coordinates heme.

Belongs to the cytochrome P450 family. Requires heme as cofactor.

It localises to the membrane. Its pathway is secondary metabolite biosynthesis. Functionally, cytochrome P450 monooxygeanse; part of the gene cluster that mediates the biosynthesis of terpendoles, indole-diterpene (IDT) mycotoxins including terpendole I, terpendole K, terpendole C, as well as the kinesin Eg5 inhibitor terpendole E. TerP has dual activity and is able to convert terpendole E to 13-desoxyterpendole I and paspaline to 13-desoxypaxilline. Terpendoles biosynthesis begins with the synthesis of geranylgeranyl diphosphate (GGPP) by a yet unidentified GGPP synthase. Condensation of indole-3-glycerol phosphate with GGPP by the prenyltransferase terC then forms 3-geranylgeranylindole (3-GGI), followed by epoxidation and cyclization of this intermediate (by the FAD-dependent monooxygeanse terM and the terpene cyclase terB) to form paspaline. The cytochrome monooxygenase terQ then hydroxylates paspalline at C-11 to yield terpendole E. The cytochrome monooxygenase terP converts terpendole E to 13-desoxyterpendole I, and terQ converts 13-desoxyterpendole I into terpendole I. TerF and terK are required for conversion of terpendole I to terpendole C which is further converted to terpendole K. The chain is Cytochrome P450 monooxygeanse terP from Tolypocladium album (Soil fungus).